The following is a 72-amino-acid chain: Crustacean hyperglycemic hormone (72 aa).

Gln1 is modified (pyrrolidone carboxylic acid). Phe3 carries the D-phenylalanine modification. 3 disulfides stabilise this stretch: Cys7–Cys43, Cys23–Cys39, and Cys26–Cys52. A Valine amide modification is found at Val72.

As to expression, produced by the medulla terminalis X-organ in the eyestalks and transported to the sinus gland where they are stored and released.

The protein localises to the secreted. Hormone found in the sinus gland of isopods and decapods which controls the blood sugar level. Has a secretagogue action over the amylase released from the midgut gland. May act as a stress hormone and may be involved in the control of molting and reproduction. This is Crustacean hyperglycemic hormone from Astacus astacus (Noble crayfish).